Consider the following 355-residue polypeptide: Probable nitronate monooxygenase (355 aa).

FMN contacts are provided by residues asparagine 71, glutamine 175, glycine 180, glycine 218, and 237 to 240; that span reads QMGT.

It belongs to the nitronate monooxygenase family. NMO class I subfamily. FMN serves as cofactor.

The enzyme catalyses 3 propionate 3-nitronate + 3 O2 + H2O = 3 3-oxopropanoate + 2 nitrate + nitrite + H2O2 + 3 H(+). Functionally, nitronate monooxygenase that uses molecular oxygen to catalyze the oxidative denitrification of alkyl nitronates. Acts on propionate 3-nitronate (P3N), the presumed physiological substrate. Probably functions in the detoxification of P3N, a metabolic poison produced by plants and fungi as a defense mechanism. The chain is Probable nitronate monooxygenase from Staphylococcus aureus (strain MRSA252).